The following is a 164-amino-acid chain: MSGPALTHIDSAGEASMVDVGDKAETVRVAVAEGFVRMKPETLALIRQGNAKKGDVIATARLAGIMAAKQTSSLIPLCHPLMLTKVSVDITPDDALPGLRVEAMAKLTGRTGVEMEALTAVSVACLTIYDMAKAADREMEIGGVRLVSKSGGRSGDYHRAGEMR.

Substrate is bound by residues 77–79 (LCH) and 115–116 (ME). The active site involves Asp-130.

The protein belongs to the MoaC family. Homohexamer; trimer of dimers.

The enzyme catalyses (8S)-3',8-cyclo-7,8-dihydroguanosine 5'-triphosphate = cyclic pyranopterin phosphate + diphosphate. The protein operates within cofactor biosynthesis; molybdopterin biosynthesis. Catalyzes the conversion of (8S)-3',8-cyclo-7,8-dihydroguanosine 5'-triphosphate to cyclic pyranopterin monophosphate (cPMP). This Rhizobium meliloti (strain 1021) (Ensifer meliloti) protein is Cyclic pyranopterin monophosphate synthase.